Consider the following 640-residue polypeptide: 1-deoxy-D-xylulose-5-phosphate synthase (640 aa).

Residues His-78 and Gly-119–Ser-121 contribute to the thiamine diphosphate site. Asp-151 lines the Mg(2+) pocket. Residues Gly-152–Ala-153, Asn-180, Tyr-289, and Glu-371 each bind thiamine diphosphate. Asn-180 contributes to the Mg(2+) binding site.

Belongs to the transketolase family. DXPS subfamily. As to quaternary structure, homodimer. Mg(2+) is required as a cofactor. Thiamine diphosphate serves as cofactor.

It carries out the reaction D-glyceraldehyde 3-phosphate + pyruvate + H(+) = 1-deoxy-D-xylulose 5-phosphate + CO2. It participates in metabolic intermediate biosynthesis; 1-deoxy-D-xylulose 5-phosphate biosynthesis; 1-deoxy-D-xylulose 5-phosphate from D-glyceraldehyde 3-phosphate and pyruvate: step 1/1. Functionally, catalyzes the acyloin condensation reaction between C atoms 2 and 3 of pyruvate and glyceraldehyde 3-phosphate to yield 1-deoxy-D-xylulose-5-phosphate (DXP). This Bartonella quintana (strain Toulouse) (Rochalimaea quintana) protein is 1-deoxy-D-xylulose-5-phosphate synthase.